Here is a 267-residue protein sequence, read N- to C-terminus: 5'-nucleotidase SurE (267 aa).

Residues aspartate 14, aspartate 15, serine 45, and asparagine 100 each coordinate a divalent metal cation.

This sequence belongs to the SurE nucleotidase family. Requires a divalent metal cation as cofactor.

It localises to the cytoplasm. It catalyses the reaction a ribonucleoside 5'-phosphate + H2O = a ribonucleoside + phosphate. Nucleotidase that shows phosphatase activity on nucleoside 5'-monophosphates. The sequence is that of 5'-nucleotidase SurE from Methanosarcina barkeri (strain Fusaro / DSM 804).